The chain runs to 98 residues: Lipolysis-activating peptide 1-alpha chain (98 aa).

Residues 1–22 (MMKLVLFGIIVILFSMIGSIHG) form the signal peptide. The 64-residue stretch at 26–89 (PGNYPLNTYG…IWDAVKRHCK (64 aa)) folds into the LCN-type CS-alpha/beta domain. Intrachain disulfides connect Cys40–Cys63, Cys49–Cys68, and Cys53–Cys70. Lys96 carries the lysine amide modification.

Belongs to the long (3 C-C) scorpion toxin superfamily. Monomer (edited version) and heterodimer (non-edited version) of this alpha chain and a beta chain (AC B8XGZ8). Expressed by the venom gland.

Its subcellular location is the secreted. The heterodimer non-edited LVP1 induces lipolysis in rat adipocytes. Induction of lipolysis by LVP1 appears to be mediated through the beta-2 adrenergic receptor pathway (ADRB2). Functionally, the edited BmKBTx-like, similar to beta-toxins, may modulate voltage-gated sodium channels (Nav) and may block voltage-gated potassium channels (Kv). This Buthus israelis (Israeli scorpion) protein is Lipolysis-activating peptide 1-alpha chain.